The following is a 945-amino-acid chain: Cysteine-rich, acidic integral membrane protein (945 aa).

Residues M1–P20 form a disordered region. An N-terminal signal peptide occupies residues M1–A23. Over V24–L882 the chain is Extracellular. N-linked (GlcNAc...) asparagine glycosylation is found at N34 and N43. A run of 66 repeats spans residues D40–T51, D52–T63, D64–T75, D76–T87, D88–T99, D100–T111, D112–T123, D124–T135, D136–T147, D148–T159, D160–T171, D172–T183, D184–T195, D196–T207, D208–T219, D220–T231, D232–T243, D244–T255, D256–T267, D268–T279, D280–T291, D292–T303, D304–T315, D316–T327, D328–T339, D340–T351, D352–T363, D364–T375, D376–T387, D388–T399, D400–T411, D412–T423, D424–T435, D436–T447, D448–T459, D460–T471, D472–T483, D484–T495, D496–T507, D508–T519, D520–T531, D532–T543, D544–T555, D556–T567, D568–T579, D580–T591, D592–T603, D604–T615, D616–T627, D628–T639, D640–T651, D652–T663, D664–T675, D676–T687, D688–T699, D700–T711, D712–T723, D724–T735, D736–T747, D748–T759, D760–T771, D772–T783, D784–T795, D796–T807, D808–T819, and D820–T831. The 66 X 12 AA tandem repeats of D-D-C-[ND]-I-T-G-D-G-N-E-T stretch occupies residues D40–T831. Residues N67, N79, N91, and N103 are each glycosylated (N-linked (GlcNAc...) asparagine). N127, N139, and N151 each carry an N-linked (GlcNAc...) asparagine glycan. An N-linked (GlcNAc...) asparagine glycan is attached at N175. 6 N-linked (GlcNAc...) asparagine glycosylation sites follow: N199, N211, N223, N235, N247, and N259. N283, N295, N307, N319, N331, and N343 each carry an N-linked (GlcNAc...) asparagine glycan. 5 N-linked (GlcNAc...) asparagine glycosylation sites follow: N367, N379, N391, N403, and N415. N439 is a glycosylation site (N-linked (GlcNAc...) asparagine). N463, N475, N487, N499, N511, and N523 each carry an N-linked (GlcNAc...) asparagine glycan. N-linked (GlcNAc...) asparagine glycosylation is found at N547, N559, N571, N583, and N595. An N-linked (GlcNAc...) asparagine glycan is attached at N619. N643, N655, N667, N679, N691, and N703 each carry an N-linked (GlcNAc...) asparagine glycan. N727, N739, N751, N763, and N775 each carry an N-linked (GlcNAc...) asparagine glycan. Residue N799 is glycosylated (N-linked (GlcNAc...) asparagine). N823 carries N-linked (GlcNAc...) asparagine glycosylation. A helical membrane pass occupies residues L883 to L903. The Cytoplasmic portion of the chain corresponds to G904–P945.

Its subcellular location is the flagellar pocket. The protein localises to the cell membrane. Its function is as follows. Supposed to function as cell surface receptor. Possibly involved in receptor-mediated endocytosis. This is Cysteine-rich, acidic integral membrane protein (CRAM) from Trypanosoma brucei brucei.